The chain runs to 339 residues: Fructose-1,6-bisphosphatase isozyme 2 (339 aa).

The tract at residues 3–10 is important for interaction with ALDOA; sequence DRSPFETD. AMP is bound by residues Val18 and 28–32; that span reads TGELT. Residues Asp69 and Glu98 each coordinate Mg(2+). An AMP-binding site is contributed by 113 to 114; that stretch reads KY. Residues Asp119, Leu121, and Asp122 each contribute to the Mg(2+) site. Asp122 is a binding site for substrate. Residue Arg141 coordinates AMP. Residues 204-208 carry the Nuclear localization signal motif; it reads KKKGK. 213-216 lines the substrate pocket; it reads NEGY. Tyr216 and Tyr219 each carry phosphotyrosine. Substrate-binding positions include 245-249, Tyr265, and Lys275; that span reads YVGSM. Glu281 serves as a coordination point for Mg(2+).

The protein belongs to the FBPase class 1 family. Homotetramer. Interacts with ALDOA; the interaction blocks inhibition by physiological concentrations of AMP and reduces inhibition by Ca(2+). Interacts with alpha-actinin and F-actin. The cofactor is Mg(2+).

The protein localises to the cell junction. It is found in the cytoplasm. Its subcellular location is the nucleus. It localises to the myofibril. The protein resides in the sarcomere. The protein localises to the z line. The catalysed reaction is beta-D-fructose 1,6-bisphosphate + H2O = beta-D-fructose 6-phosphate + phosphate. Its pathway is carbohydrate biosynthesis; gluconeogenesis. Subject to complex allosteric regulation. The enzyme can assume an active R-state, or an inactive T-state. Intermediate conformations may exist. AMP acts as an allosteric inhibitor. Fructose 2,6-bisphosphate acts as a competitive inhibitor. Strongly inhibited by Ca(2+). In terms of biological role, catalyzes the hydrolysis of fructose 1,6-bisphosphate to fructose 6-phosphate in the presence of divalent cations and probably participates in glycogen synthesis from carbohydrate precursors, such as lactate. The chain is Fructose-1,6-bisphosphatase isozyme 2 (FBP2) from Oryctolagus cuniculus (Rabbit).